Reading from the N-terminus, the 259-residue chain is ATP synthase subunit a (259 aa).

The next 5 helical transmembrane spans lie at 29–49 (TVNI…IWIF), 90–110 (IAPL…MDLI), 134–154 (DVNI…IYSI), 208–228 (LVFI…LSVP), and 230–250 (ALFH…LTIV).

Belongs to the ATPase A chain family. In terms of assembly, F-type ATPases have 2 components, CF(1) - the catalytic core - and CF(0) - the membrane proton channel. CF(1) has five subunits: alpha(3), beta(3), gamma(1), delta(1), epsilon(1). CF(0) has three main subunits: a(1), b(2) and c(9-12). The alpha and beta chains form an alternating ring which encloses part of the gamma chain. CF(1) is attached to CF(0) by a central stalk formed by the gamma and epsilon chains, while a peripheral stalk is formed by the delta and b chains.

It localises to the cell inner membrane. In terms of biological role, key component of the proton channel; it plays a direct role in the translocation of protons across the membrane. The protein is ATP synthase subunit a of Aeromonas salmonicida (strain A449).